A 320-amino-acid chain; its full sequence is Heptaprenyl diphosphate synthase component 2 (320 aa).

Isopentenyl diphosphate contacts are provided by Lys-45, Arg-48, and His-77. Mg(2+) contacts are provided by Asp-84 and Asp-88. Residue Arg-93 coordinates all-trans-hexaprenyl diphosphate. Arg-94 is an isopentenyl diphosphate binding site. All-trans-hexaprenyl diphosphate is bound by residues Lys-170, Thr-171, and Gln-208.

This sequence belongs to the FPP/GGPP synthase family. As to quaternary structure, heterodimer of component I and II. Mg(2+) serves as cofactor.

The catalysed reaction is 4 isopentenyl diphosphate + (2E,6E)-farnesyl diphosphate = all-trans-heptaprenyl diphosphate + 4 diphosphate. Functionally, supplies heptaprenyl diphosphate, the precursor for the side chain of the isoprenoid quinone menaquinone-7 (MQ-7). This Geobacillus stearothermophilus (Bacillus stearothermophilus) protein is Heptaprenyl diphosphate synthase component 2 (hepT).